A 407-amino-acid polypeptide reads, in one-letter code: 12S rRNA N(4)-cytidine methyltransferase METTL15 (407 aa).

Residues 44–63 are disordered; sequence EAQEETDQTGIQELHRSQDR. S-adenosyl-L-methionine contacts are provided by residues 100-102, Asp119, Phe146, Asp169, and Gln176; that span reads GGH. Ser358 carries the phosphoserine modification. Residues 386–407 form a disordered region; sequence EDEDVQDNPRGRSAKLRAAIKL. Positions 397-407 are enriched in basic residues; the sequence is RSAKLRAAIKL.

The protein belongs to the methyltransferase superfamily. RsmH family.

It localises to the mitochondrion matrix. It catalyses the reaction cytidine(839) in 12S rRNA + S-adenosyl-L-methionine = N(4)-methylcytidine(839) in 12S rRNA + S-adenosyl-L-homocysteine + H(+). Functionally, N4-methylcytidine (m4C) methyltransferase responsible for the methylation of position C839 in mitochondrial 12S rRNA. Involved in the stabilization of 12S rRNA folding, therefore facilitating the assembly of the mitochondrial small ribosomal subunits. In Bos taurus (Bovine), this protein is 12S rRNA N(4)-cytidine methyltransferase METTL15 (METTL15).